We begin with the raw amino-acid sequence, 131 residues long: Jacalin-related lectin 15 (131 aa).

Positions M1–P126 constitute a Jacalin-type lectin domain.

This sequence belongs to the jacalin lectin family. In terms of tissue distribution, expressed in the vascular and surrounding tissues in cotyledons. Detected in root apical meristems.

The protein is Jacalin-related lectin 15 (JAL15) of Arabidopsis thaliana (Mouse-ear cress).